The chain runs to 161 residues: Dihydrofolate reductase type 1 from Tn4003 (161 aa).

The 156-residue stretch at 2–157 (TLSIIVAHDK…IPHTFLHLVR (156 aa)) folds into the DHFR domain. 6 to 8 (IVA) contacts substrate. Residues 7 to 8 (VA) and 15 to 20 (IGYQNQ) contribute to the NADP(+) site. Residue D28 coordinates substrate. Position 44–47 (44–47 (ARKT)) interacts with NADP(+). Position 58 (R58) interacts with substrate. NADP(+)-binding positions include 63-66 (LTNQ) and 93-98 (FGGQTL). T112 is a substrate binding site.

The protein belongs to the dihydrofolate reductase family.

It carries out the reaction (6S)-5,6,7,8-tetrahydrofolate + NADP(+) = 7,8-dihydrofolate + NADPH + H(+). It functions in the pathway cofactor biosynthesis; tetrahydrofolate biosynthesis; 5,6,7,8-tetrahydrofolate from 7,8-dihydrofolate: step 1/1. Key enzyme in folate metabolism. Catalyzes an essential reaction for de novo glycine and purine synthesis, and for DNA precursor synthesis. The chain is Dihydrofolate reductase type 1 from Tn4003 (dfrA) from Staphylococcus aureus.